The sequence spans 336 residues: MSSAIPLNVGIARSAGTATVDADTAKRVLLAEPRGYCAGVDRAVETVEKALEKHGAPIYVRKEIVHNRHVVETLRERGVVFVDDTAEVPEGAVVVFSAHGVSPAVHEAAAARNLHTIDATCPLVTKVHQEAKRFARDDYDILLIGHEGHEEVEGTAGEAPEHVQLVDGPDAVDRVRVRDENKVIWLSQTTLSVDETMETVQRLRERFPSLQDPPSDDICYATQNRQVAVKAMAPECDLVIVVGSRNSSNSVRLVEVALNAGAKAAHLVDYAREVDPAWLEGVRTIGITSGASVPEILVRGVLDMLAEHGYADVQPVTTANETLVFALPRELRTTRR.

Cysteine 37 contacts [4Fe-4S] cluster. Residues histidine 66 and histidine 99 each coordinate (2E)-4-hydroxy-3-methylbut-2-enyl diphosphate. Residues histidine 66 and histidine 99 each coordinate dimethylallyl diphosphate. Histidine 66 and histidine 99 together coordinate isopentenyl diphosphate. [4Fe-4S] cluster is bound at residue cysteine 121. Histidine 149 contributes to the (2E)-4-hydroxy-3-methylbut-2-enyl diphosphate binding site. Histidine 149 serves as a coordination point for dimethylallyl diphosphate. Isopentenyl diphosphate is bound at residue histidine 149. Glutamate 151 (proton donor) is an active-site residue. Threonine 189 is a (2E)-4-hydroxy-3-methylbut-2-enyl diphosphate binding site. Cysteine 219 contributes to the [4Fe-4S] cluster binding site. (2E)-4-hydroxy-3-methylbut-2-enyl diphosphate contacts are provided by serine 247, serine 248, asparagine 249, and serine 292. Residues serine 247, serine 248, asparagine 249, and serine 292 each contribute to the dimethylallyl diphosphate site. Isopentenyl diphosphate is bound by residues serine 247, serine 248, asparagine 249, and serine 292.

The protein belongs to the IspH family. It depends on [4Fe-4S] cluster as a cofactor.

The enzyme catalyses isopentenyl diphosphate + 2 oxidized [2Fe-2S]-[ferredoxin] + H2O = (2E)-4-hydroxy-3-methylbut-2-enyl diphosphate + 2 reduced [2Fe-2S]-[ferredoxin] + 2 H(+). It carries out the reaction dimethylallyl diphosphate + 2 oxidized [2Fe-2S]-[ferredoxin] + H2O = (2E)-4-hydroxy-3-methylbut-2-enyl diphosphate + 2 reduced [2Fe-2S]-[ferredoxin] + 2 H(+). The protein operates within isoprenoid biosynthesis; dimethylallyl diphosphate biosynthesis; dimethylallyl diphosphate from (2E)-4-hydroxy-3-methylbutenyl diphosphate: step 1/1. Its pathway is isoprenoid biosynthesis; isopentenyl diphosphate biosynthesis via DXP pathway; isopentenyl diphosphate from 1-deoxy-D-xylulose 5-phosphate: step 6/6. In terms of biological role, catalyzes the conversion of 1-hydroxy-2-methyl-2-(E)-butenyl 4-diphosphate (HMBPP) into a mixture of isopentenyl diphosphate (IPP) and dimethylallyl diphosphate (DMAPP). Acts in the terminal step of the DOXP/MEP pathway for isoprenoid precursor biosynthesis. The sequence is that of 4-hydroxy-3-methylbut-2-enyl diphosphate reductase from Nocardia farcinica (strain IFM 10152).